Here is a 979-residue protein sequence, read N- to C-terminus: Receptor-type tyrosine-protein phosphatase-like N (979 aa).

A signal peptide spans 1–37 (MRRPRRPGGSGGSGGSGGLRLLVCLLLLSGRPGGCSA). Positions 38–134 (ISAHGCLFDR…HPRDRSGLVP (97 aa)) are RESP18 homology domain. Over 38–575 (ISAHGCLFDR…RQAHGISPMR (538 aa)) the chain is Lumenal. Cysteine 56 and cysteine 65 are joined by a disulfide. A compositionally biased stretch (basic and acidic residues) spans 113-130 (MERIPRLRPPEPHPRDRS). 3 disordered regions span residues 113–173 (MERI…GSPL), 289–330 (GRAR…AAQP), and 392–443 (MQRG…SSSV). The span at 145-155 (TQGNPTGSSPA) shows a compositional bias: polar residues. The segment covering 303–322 (RAEDSSEGHEEEVLGGRGEK) has biased composition (basic and acidic residues). A phosphoserine mark is found at serine 307 and serine 308. The segment covering 414-424 (SPASSEVQQVL) has biased composition (polar residues). The interval 449–575 (SPLGQSQPTV…RQAHGISPMR (127 aa)) is sufficient for dimerization of proICA512. Asparagine 506 and asparagine 524 each carry an N-linked (GlcNAc...) asparagine glycan. A helical membrane pass occupies residues 576-600 (SVLLTLVALAGVAGLLVALAVALCM). The interval 601 to 732 (RHHSRQRDKE…PNTCAAAQDE (132 aa)) is sufficient for dimerization of proICA512. The Cytoplasmic segment spans residues 601-979 (RHHSRQRDKE…VNAILKALPQ (379 aa)). The interval 644–680 (RAEGQPEPSRVSSVSSQFSDAAQASPSSHSSTPSWCE) is disordered. A compositionally biased stretch (low complexity) spans 648–677 (QPEPSRVSSVSSQFSDAAQASPSSHSSTPS). Residues 709–969 (LAKEWQALCA…EFALTAVAEE (261 aa)) enclose the Tyrosine-protein phosphatase domain. Residue lysine 754 forms a Glycyl lysine isopeptide (Lys-Gly) (interchain with G-Cter in SUMO) linkage.

The protein belongs to the protein-tyrosine phosphatase family. Receptor class 8 subfamily. In terms of assembly, homodimer; shown for the unprocessed protein (proICA512) in the endoplasmic reticulum and resolved during protein maturation as ICA512-TMF seems to be predominantly monomeric in secretory granules; however, ICA512-CCF interacts with ICA512-TMF disrupting the ICA512-TMF:SNTB2 complex. The isolated lumenal RESP18 homology domain has been shown to form disulfide-linked homooligomers. Interacts (via cytoplasmic domain) with phosphorylated SNTB2; this protects PTPRN against cleavage by CAPN1 to produce ICA512-CCF. Dephosphorylation of SNTB2 upon insulin stimulation disrupts the interaction and results in PTPRN cleavage. Interacts with SNX19. ICA512-CCF interacts with PIAS4; in the nucleus. Interacts with STAT5B (phosphorylated); down-regulated by ICA512-CCF sumoylation; ICA512-CCF prevents STAT5B dephosphorylation; ICA512-CCF mediates interaction of STAT5B with PIAS4. Interacts (via RESP18 homology domain) with insulin and proinsulin. Interacts with PTPRN2, PTPRA and PTPRE. In terms of processing, subject to proteolytic cleavage at multiple sites. Subject to cleavage on a pair of basic residues. On exocytosis of secretory granules in pancreatic beta-cells ICA512-TMF is transiently inserted in the plasma-membrane and cleaved by mu-type calpain CPN1 to yield ICA512-CCF. Post-translationally, O-glycosylated. N-glycosylated. In terms of processing, sumoylated at two sites including Lys-754. Sumoylation decreases interaction with STAT5. As to expression, detected in pituitary. Detected in brain (at protein level). Detected in brain. Weakly expressed in the colon, intestine, stomach and pancreas.

It is found in the membrane. The protein resides in the cytoplasmic vesicle. The protein localises to the secretory vesicle membrane. It localises to the perikaryon. Its subcellular location is the cell projection. It is found in the axon. The protein resides in the synapse. The protein localises to the cell membrane. It localises to the endosome. Its subcellular location is the nucleus. In terms of biological role, plays a role in vesicle-mediated secretory processes. Required for normal accumulation of secretory vesicles in hippocampus, pituitary and pancreatic islets. Required for the accumulation of normal levels of insulin-containing vesicles and preventing their degradation. Plays a role in insulin secretion in response to glucose stimuli. Required for normal accumulation of the neurotransmitters norepinephrine, dopamine and serotonin in the brain. In females, but not in males, required for normal accumulation and secretion of pituitary hormones, such as luteinizing hormone (LH) and follicle-stimulating hormone (FSH). Seems to lack intrinsic enzyme activity. Required to maintain normal levels of renin expression and renin release. May regulate catalytic active protein-tyrosine phosphatases such as PTPRA through dimerization. Functionally, ICA512-TMF regulates dynamics and exocytosis of insulin secretory granules (SGs); binding of ICA512-TMF to SNTB2/beta-2-syntrophin is proposed to restrain SGs mobility and exocytosis by tethering them to the actin cytoskeleton depending on UTRN; the function is inhibited by cytoplasmic ICA512-CFF dimerizing with ICA512-TMF and displacing SNTB2. Its function is as follows. ICA512-CCF translocated to the nucleus promotes expression of insulin and other granule-related genes; the function implicates binding to and regulating activity of STAT5B probably by preventing its dephosphorylation and potentially by inducing its sumoylation by recruiting PIAS4. Enhances pancreatic beta-cell proliferation by converging with signaling by STAT5B and STAT3. ICA512-CCF located in the cytoplasm regulates dynamics and exocytosis of insulin secretory granules (SGs) by dimerizing with ICA512-TMF and displacing SNTB2 thus enhancing SGs mobility and exocytosis. This Mus musculus (Mouse) protein is Receptor-type tyrosine-protein phosphatase-like N (Ptprn).